We begin with the raw amino-acid sequence, 250 residues long: Type III pantothenate kinase (250 aa).

ATP is bound at residue 13–20; that stretch reads DVGNSYLK. 110-113 serves as a coordination point for substrate; it reads GNDL. Asp-112 serves as the catalytic Proton acceptor. Thr-134 provides a ligand contact to ATP. Thr-186 is a substrate binding site.

This sequence belongs to the type III pantothenate kinase family. As to quaternary structure, homodimer. It depends on NH4(+) as a cofactor. Requires K(+) as cofactor.

It is found in the cytoplasm. It carries out the reaction (R)-pantothenate + ATP = (R)-4'-phosphopantothenate + ADP + H(+). The protein operates within cofactor biosynthesis; coenzyme A biosynthesis; CoA from (R)-pantothenate: step 1/5. Catalyzes the phosphorylation of pantothenate (Pan), the first step in CoA biosynthesis. This Mycoplasmopsis synoviae (strain 53) (Mycoplasma synoviae) protein is Type III pantothenate kinase.